Here is a 205-residue protein sequence, read N- to C-terminus: Ephrin-A1 (205 aa).

Positions Met1–Ala18 are cleaved as a signal peptide. Positions Asp19–Ile151 constitute an Ephrin RBD domain. Asn26 is a glycosylation site (N-linked (GlcNAc...) asparagine). Disulfide bonds link Cys51–Cys92 and Cys80–Cys140. Ser182 is lipidated: GPI-anchor amidated serine. Positions Ala183 to Pro205 are cleaved as a propeptide — removed in mature form.

This sequence belongs to the ephrin family. As to quaternary structure, monomer. Homodimer. Forms heterodimers with EPHA2. Binds to the receptor tyrosine kinases EPHA2, EPHA3, EPHA4, EPHA5, EPHA6 and EPHA7. Also binds with low affinity to EPHA1. In terms of processing, undergoes proteolysis by a metalloprotease to give rise to a soluble monomeric form. N-Glycosylation is required for binding to EPHA2 receptor and inducing its internalization. In terms of tissue distribution, brain. Down-regulated in primary glioma tissues compared to the normal tissues. The soluble monomeric form is expressed in the glioblastoma multiforme (GBM) and breast cancer cells (at protein level).

It is found in the cell membrane. It localises to the secreted. Functionally, cell surface GPI-bound ligand for Eph receptors, a family of receptor tyrosine kinases which are crucial for migration, repulsion and adhesion during neuronal, vascular and epithelial development. Binds promiscuously Eph receptors residing on adjacent cells, leading to contact-dependent bidirectional signaling into neighboring cells. Plays an important role in angiogenesis and tumor neovascularization. The recruitment of VAV2, VAV3 and PI3-kinase p85 subunit by phosphorylated EPHA2 is critical for EFNA1-induced RAC1 GTPase activation and vascular endothelial cell migration and assembly. Exerts anti-oncogenic effects in tumor cells through activation and down-regulation of EPHA2. Activates EPHA2 by inducing tyrosine phosphorylation which leads to its internalization and degradation. Acts as a negative regulator in the tumorigenesis of gliomas by down-regulating EPHA2 and FAK. Can evoke collapse of embryonic neuronal growth cone and regulates dendritic spine morphogenesis. The polypeptide is Ephrin-A1 (EFNA1) (Homo sapiens (Human)).